The chain runs to 498 residues: Pyruvate kinase (498 aa).

Residue Arg-53 participates in substrate binding. K(+)-binding residues include Asn-55, Ser-57, Asp-87, and Thr-88. 55-58 provides a ligand contact to ATP; that stretch reads NFSH. The ATP site is built by Arg-94 and Lys-178. Glu-240 provides a ligand contact to Mg(2+). Substrate-binding residues include Gly-263, Asp-264, and Thr-296. Residue Asp-264 participates in Mg(2+) binding.

Belongs to the pyruvate kinase family. In terms of assembly, homotetramer. The cofactor is Mg(2+). Requires K(+) as cofactor.

The enzyme catalyses pyruvate + ATP = phosphoenolpyruvate + ADP + H(+). It functions in the pathway carbohydrate degradation; glycolysis; pyruvate from D-glyceraldehyde 3-phosphate: step 5/5. This Trypanoplasma borreli protein is Pyruvate kinase (PYK).